The chain runs to 188 residues: GTP cyclohydrolase 1 (188 aa).

Zn(2+) contacts are provided by Cys-78, His-81, and Cys-150.

Belongs to the GTP cyclohydrolase I family. Toroid-shaped homodecamer, composed of two pentamers of five dimers.

The enzyme catalyses GTP + H2O = 7,8-dihydroneopterin 3'-triphosphate + formate + H(+). Its pathway is cofactor biosynthesis; 7,8-dihydroneopterin triphosphate biosynthesis; 7,8-dihydroneopterin triphosphate from GTP: step 1/1. This Halalkalibacterium halodurans (strain ATCC BAA-125 / DSM 18197 / FERM 7344 / JCM 9153 / C-125) (Bacillus halodurans) protein is GTP cyclohydrolase 1.